The primary structure comprises 421 residues: Putative aspartate aminotransferase, cytoplasmic 2 (421 aa).

Lys249 bears the N6-(pyridoxal phosphate)lysine mark.

It belongs to the class-I pyridoxal-phosphate-dependent aminotransferase family. Homodimer. Pyridoxal 5'-phosphate serves as cofactor.

It is found in the cytoplasm. The enzyme catalyses L-aspartate + 2-oxoglutarate = oxaloacetate + L-glutamate. This Homo sapiens (Human) protein is Putative aspartate aminotransferase, cytoplasmic 2 (GOT1L1).